Reading from the N-terminus, the 127-residue chain is Cliotide T3 (127 aa).

The signal sequence occupies residues 1 to 24 (MAYVRLTSLAVLFFLAASVMKTEG). The cyclopeptide (Gly-Asn) cross-link spans 25 to 53 (GLPTCGETCTLGTCYVPDCSCSWPICMKN). Intrachain disulfides connect cysteine 29/cysteine 43, cysteine 33/cysteine 45, and cysteine 38/cysteine 50. Positions 54-127 (HIIAANAKTV…DLKMPLESTN (74 aa)) are cleaved as a propeptide — removed in mature form.

In terms of processing, contains 3 disulfide bonds. Post-translationally, this is a cyclic peptide. In terms of tissue distribution, expressed in flower, stem, shoot, leaf and seed but not in root, pod and nodule (at protein level).

Probably participates in a plant defense mechanism. Not active against Gram-negative bacteria E.coli ATCC 700926, K.pneumoniae ATTC 13883 and P.aeruginosa ATCC 39018 at concentration up to 100 uM. Has cytotoxic and hemolytic activity. This Clitoria ternatea (Butterfly pea) protein is Cliotide T3.